The sequence spans 577 residues: Secreted LysM effector Lys4 (577 aa).

Positions 1–19 (MRALTAAVLFVAGLTPVLA) are cleaved as a signal peptide. Residues 38–85 (AWYTIVKGDGCDTVEKKFKITPEQFFKWNPDVSTDCVKNFWVGNSYCV) enclose the LysM 1 domain. Positions 96 to 121 (TSTTVKSSSTTQKTSSTSSKLSSSSK) are enriched in low complexity. Positions 96-135 (TSTTVKSSSTTQKTSSTSSKLSSSSKPVNTTTTPYSTRNP) are disordered. Residues 122–135 (PVNTTTTPYSTRNP) are compositionally biased toward polar residues. Asparagine 124, asparagine 140, asparagine 216, and asparagine 235 each carry an N-linked (GlcNAc...) asparagine glycan. LysM domains lie at 251-298 (NFYQ…YYCV), 328-375 (KWYQ…WYCV), and 408-455 (QYWL…YVCV). A compositionally biased stretch (low complexity) spans 464–485 (SGSTTTITGPPTKGSNPPTTTT). Residues 464–490 (SGSTTTITGPPTKGSNPPTTTTSGGGG) are disordered. Residues 510-558 (FWFRGKDGASLFCADIAKDAGVSLPDFLKWNPGVGSNCESLWADTWYCV) enclose the LysM 5 domain.

The protein belongs to the secreted LysM effector family.

In terms of biological role, might have a role in sequestration of chitin oligosaccharides (breakdown products of fungal cell walls that are released during invasion and act as triggers of host immunity) to dampen host defense. This chain is Secreted LysM effector Lys4, found in Pochonia chlamydosporia (strain 123) (Metacordyceps chlamydosporia).